Here is a 223-residue protein sequence, read N- to C-terminus: Uracil-DNA glycosylase (223 aa).

Asp67 functions as the Proton acceptor in the catalytic mechanism.

The protein belongs to the uracil-DNA glycosylase (UDG) superfamily. UNG family.

The protein resides in the cytoplasm. The enzyme catalyses Hydrolyzes single-stranded DNA or mismatched double-stranded DNA and polynucleotides, releasing free uracil.. Excises uracil residues from the DNA which can arise as a result of misincorporation of dUMP residues by DNA polymerase or due to deamination of cytosine. The sequence is that of Uracil-DNA glycosylase from Borrelia turicatae (strain 91E135).